A 535-amino-acid polypeptide reads, in one-letter code: GMP synthase [glutamine-hydrolyzing] (535 aa).

Residues 4–210 (KILILDFGSQ…VHEICKCKPD (207 aa)) enclose the Glutamine amidotransferase type-1 domain. The Nucleophile role is filled by Cys85. Residues His184 and Glu186 contribute to the active site. One can recognise a GMPS ATP-PPase domain in the interval 211–403 (WVMGDYIAEA…LGLPREMVYR (193 aa)). Residue 238 to 244 (SGGVDSS) participates in ATP binding.

Homodimer.

It carries out the reaction XMP + L-glutamine + ATP + H2O = GMP + L-glutamate + AMP + diphosphate + 2 H(+). It participates in purine metabolism; GMP biosynthesis; GMP from XMP (L-Gln route): step 1/1. Catalyzes the synthesis of GMP from XMP. This Polynucleobacter necessarius subsp. necessarius (strain STIR1) protein is GMP synthase [glutamine-hydrolyzing].